The sequence spans 303 residues: Glycosyltransferase AglJ (303 aa).

The next 2 membrane-spanning stretches (helical) occupy residues 230–250 (FYFG…ALYV) and 263–283 (VIAV…MFGV).

The protein belongs to the glycosyltransferase 2 family.

Its subcellular location is the cell membrane. The protein operates within cell surface structure biogenesis; S-layer biogenesis. In terms of biological role, involved in the assembly of a N-linked pentasaccharide that decorates the S-layer glycoprotein and flagellins. Adds the first hexose subunit of the pentasaccharide to the dolichol phosphate carrier. The protein is Glycosyltransferase AglJ (aglJ) of Haloferax volcanii (strain ATCC 29605 / DSM 3757 / JCM 8879 / NBRC 14742 / NCIMB 2012 / VKM B-1768 / DS2) (Halobacterium volcanii).